Reading from the N-terminus, the 186-residue chain is Hydra actinoporin-like toxin 1 (186 aa).

An N-terminal signal peptide occupies residues 1 to 18 (MLLYICLVNLLLPLSVGA). The N-terminal region stretch occupies residues 29–48 (KVGVDAALQQIDDVWKGKTV). The short motif at 158-160 (RAG) is the Cell attachment site, crucial for protein stability element.

The protein belongs to the actinoporin family. HALT subfamily. As to quaternary structure, octamer or nonamer in membranes. Monomer in the soluble state. In vitro, interacts with folate receptor alpha (of target organism). As to expression, expressed female germline during oogenesis.

It localises to the nematocyst. It is found in the secreted. The protein resides in the target cell membrane. Pore-forming protein that forms hydrophilic pores and causes cytolysis. Compared to equinatoxin-2 (AC P61914), it reveals lower cytolysis activity (5-12-fold difference, tested on erythrocytes), a larger pore size (probably 2-3 nm) and different affinity to membrane lipids (100-fold lower affinity to sphingomyelin). Binds to sulfatides (SFT) as well as to the two sphingolipids, lysophosphatidic acid (LPA) and sphingosine-1-phosphate (S1P). It seems to bind more strongly to LPA than to S1P and SFT. Shows cytolytic activity on HeLa cells, with a different potency than its paralogs (from most potent to less potent: HALT-4&gt;HALT-6~HALT-1&gt;HALT-3&gt;HALT-7&gt;HALT-2). Pore formation is a multi-step process that involves specific recognition of membrane lipid by a protein aromatic residues rich region, firm binding to the membrane (mainly driven by hydrophobic interactions) accompanied by the transfer of the N-terminal region to the lipid-water interface and finally pore formation after oligomerization of monomers. In vitro, binds to the folate receptor alpha (FOLR1), a GPI-anchored membrane protein that plays a major role in the uptake of folate/folic acid into cells via endocytosis, suggesting a possible involvement of this receptor in the mechanism of HALT-1-induced cell lysis. In vivo, does not cause visible paralysis in larvae of the blowfly Sarcophaga faculata, the most common arthropod prey of Hydra. This is Hydra actinoporin-like toxin 1 from Hydra vulgaris (Hydra).